Consider the following 152-residue polypeptide: Natriuretic peptides A (152 aa).

Positions Met-1–Ala-24 are cleaved as a signal peptide. Propeptides lie at residues Asn-25–Arg-122 and Glu-92–Gly-102. The segment at Met-50–Val-108 is disordered. The residue at position 128 (Ser-128) is a Phosphoserine. Cysteines 129 and 145 form a disulfide. The tract at residues Asn-146–Tyr-150 is important for degradation of atrial natriuretic peptide by IDE.

This sequence belongs to the natriuretic peptide family. In terms of assembly, homodimer; disulfide-linked antiparallel dimer. In terms of processing, the precursor molecule is proteolytically cleaved by CORIN at Arg-122 to produce the atrial natriuretic peptide. Undergoes further proteolytic cleavage by unknown proteases to give rise to long-acting natriuretic peptide, vessel dilator and kaliuretic peptide. Additional processing gives rise to the auriculin and atriopeptin peptides. In the kidneys, alternative processing by an unknown protease results in the peptide urodilatin. Cleavage by MME initiates degradation of the factor and thereby regulates its activity. Degradation by IDE results in reduced activation of NPR1 (in vitro). During IDE degradation, the resulting products can temporarily stimulate NPR2 to produce cGMP, before the fragments are completely degraded and inactivated by IDE (in vitro). Post-translationally, degraded by IDE. In terms of processing, phosphorylation on Ser-128 decreases vasorelaxant activity.

Its subcellular location is the secreted. The protein localises to the perikaryon. It localises to the cell projection. Hormone that plays a key role in mediating cardio-renal homeostasis, and is involved in vascular remodeling and regulating energy metabolism. Acts by specifically binding and stimulating NPR1 to produce cGMP, which in turn activates effector proteins, such as PRKG1, that drive various biological responses. Regulates vasodilation, natriuresis, diuresis and aldosterone synthesis and is therefore essential for regulating blood pressure, controlling the extracellular fluid volume and maintaining the fluid-electrolyte balance. Also involved in inhibiting cardiac remodeling and cardiac hypertrophy by inducing cardiomyocyte apoptosis and attenuating the growth of cardiomyocytes and fibroblasts. Plays a role in female pregnancy by promoting trophoblast invasion and spiral artery remodeling in uterus, and thus prevents pregnancy-induced hypertension. In adipose tissue, acts in various cGMP- and PKG-dependent pathways to regulate lipid metabolism and energy homeostasis. This includes up-regulating lipid metabolism and mitochondrial oxygen utilization by activating the AMP-activated protein kinase (AMPK), and increasing energy expenditure by acting via MAPK11 to promote the UCP1-dependent thermogenesis of brown adipose tissue. Binds the clearance receptor NPR3 which removes the hormone from circulation. Functionally, may have a role in cardio-renal homeostasis through regulation of natriuresis, diuresis, vasodilation, and inhibiting aldosterone synthesis. In vitro, promotes the production of cGMP and induces vasodilation. May promote natriuresis, at least in part, by enhancing prostaglandin E2 synthesis resulting in the inhibition of renal Na+-K+-ATPase. However reports on the involvement of this peptide in mammal blood volume and blood pressure homeostasis are conflicting; according to a report, in vivo it is not sufficient to activate cGMP and does not inhibit collecting duct transport nor effect diuresis and natriuresis. Appears to bind to specific receptors that are distinct from the receptors bound by atrial natriuretic peptide and vessel dilator. Possibly enhances protein excretion in urine by decreasing proximal tubular protein reabsorption. Its function is as follows. May have a role in cardio-renal homeostasis through regulation of natriuresis, diuresis, and vasodilation. In vitro, promotes the production of cGMP and induces vasodilation. May promote natriuresis, at least in part, by enhancing prostaglandin E2 synthesis resulting in the inhibition of renal Na+-K+-ATPase. However reports on the involvement of this peptide in mammal blood volume and blood pressure homeostasis are conflicting; according to a report it is not sufficient to activate cGMP and does not inhibit collecting duct transport nor effect diuresis and natriuresis. Appears to bind to specific receptors that are distinct from the receptors bound by the atrial natriuretic and long-acting natriuretic peptides. Possibly functions in protein excretion in urine by maintaining the integrity of the proximal tubules and enhancing protein excretion by decreasing proximal tubular protein reabsorption. In terms of biological role, may have a role in cardio-renal homeostasis through regulation of diuresis and inhibiting aldosterone synthesis. In vitro, promotes the production of cGMP and induces vasodilation. May promote natriuresis, at least in part, by enhancing prostaglandin E2 synthesis resulting in the inhibition of renal Na+-K+-ATPase. May have a role in potassium excretion but not sodium excretion (natriuresis). Possibly enhances protein excretion in urine by decreasing proximal tubular protein reabsorption. Hormone produced in the kidneys that appears to be important for maintaining cardio-renal homeostasis. Mediates vasodilation, natriuresis and diuresis primarily in the renal system, in order to maintain the extracellular fluid volume and control the fluid-electrolyte balance. Specifically binds and stimulates cGMP production by renal transmembrane receptors, likely NPR1. Urodilatin not ANP, may be the natriuretic peptide responsible for the regulation of sodium and water homeostasis in the kidney. Functionally, may have a role in cardio-renal homeostasis through regulation of natriuresis and vasodilation. In vivo promotes natriuresis and in vitro, vasodilates renal artery strips. Its function is as follows. May have a role in cardio-renal homeostasis through regulation of regulation of natriuresis and vasodilation. In vivo promotes natriuresis. In vitro, vasodilates intestinal smooth muscle but not smooth muscle strips. In terms of biological role, may have a role in cardio-renal homeostasis through regulation of natriuresis and vasodilation. In vivo promotes natriuresis. In vitro, selectively vasodilates intestinal and vascular smooth muscle strips. May have a role in cardio-renal homeostasis through regulation of natriuresis and vasodilation. In vivo promotes natriuresis. In vitro, selectively vasodilates intestinal smooth muscle but not vascular smooth muscle strips. The sequence is that of Natriuretic peptides A (NPPA) from Ovis aries (Sheep).